Reading from the N-terminus, the 297-residue chain is Formylmethanofuran--tetrahydromethanopterin formyltransferase (297 aa).

Belongs to the FTR family. Homotetramer.

It localises to the cytoplasm. The catalysed reaction is N-formylmethanofuran + 5,6,7,8-tetrahydromethanopterin + H(+) = N(5)-formyl-5,6,7,8-tetrahydromethanopterin + methanofuran. Its pathway is metabolic intermediate metabolism; lactate oxidation. Functionally, catalyzes the transfer of a formyl group from 5-formyl tetrahydromethanopterin (5-formyl-H(4)MPT) to methanofuran (MFR) to produce formylmethanofuran (formyl-MFR) and tetrahydromethanopterin (H(4)MPT). This chain is Formylmethanofuran--tetrahydromethanopterin formyltransferase, found in Archaeoglobus fulgidus (strain ATCC 49558 / DSM 4304 / JCM 9628 / NBRC 100126 / VC-16).